Here is a 241-residue protein sequence, read N- to C-terminus: Ribonuclease PH (241 aa).

Phosphate-binding positions include arginine 87 and 125-127; that span reads GTR.

It belongs to the RNase PH family. Homohexameric ring arranged as a trimer of dimers.

It carries out the reaction tRNA(n+1) + phosphate = tRNA(n) + a ribonucleoside 5'-diphosphate. Functionally, phosphorolytic 3'-5' exoribonuclease that plays an important role in tRNA 3'-end maturation. Removes nucleotide residues following the 3'-CCA terminus of tRNAs; can also add nucleotides to the ends of RNA molecules by using nucleoside diphosphates as substrates, but this may not be physiologically important. Probably plays a role in initiation of 16S rRNA degradation (leading to ribosome degradation) during starvation. This is Ribonuclease PH from Nitrosomonas europaea (strain ATCC 19718 / CIP 103999 / KCTC 2705 / NBRC 14298).